We begin with the raw amino-acid sequence, 247 residues long: tRNA (guanine-N(7)-)-methyltransferase (247 aa).

S-adenosyl-L-methionine contacts are provided by residues glycine 70, 93 to 94 (EI), 128 to 129 (NA), and leucine 148. Aspartate 151 is a catalytic residue. An S-adenosyl-L-methionine-binding site is contributed by 226–228 (SEE).

The protein belongs to the class I-like SAM-binding methyltransferase superfamily. TrmB family.

The protein localises to the nucleus. It catalyses the reaction guanosine(46) in tRNA + S-adenosyl-L-methionine = N(7)-methylguanosine(46) in tRNA + S-adenosyl-L-homocysteine. It participates in tRNA modification; N(7)-methylguanine-tRNA biosynthesis. Catalyzes the formation of N(7)-methylguanine at position 46 (m7G46) in tRNA. The sequence is that of tRNA (guanine-N(7)-)-methyltransferase from Drosophila virilis (Fruit fly).